We begin with the raw amino-acid sequence, 876 residues long: Aspartate--tRNA(Asp/Asn) ligase (876 aa).

The unknown stretch occupies residues 1 to 278 (MAATDTPWRP…FGFKRAYEGF (278 aa)). The tract at residues 279 to 876 (MHVYRSHTCG…PKPKKEVKEG (598 aa)) is aspartyl-tRNA synthetase. Glutamate 453 lines the L-aspartate pocket. Positions 477-480 (QQFK) are aspartate. Arginine 499 and histidine 729 together coordinate L-aspartate. 499-501 (RDE) is an ATP binding site. Glutamate 763 contributes to the ATP binding site. Arginine 770 contributes to the L-aspartate binding site. ATP is bound at residue 815 to 818 (GVDR).

This sequence belongs to the class-II aminoacyl-tRNA synthetase family. Type 1 subfamily. Homodimer.

Its subcellular location is the cytoplasm. It carries out the reaction tRNA(Asx) + L-aspartate + ATP = L-aspartyl-tRNA(Asx) + AMP + diphosphate. Functionally, aspartyl-tRNA synthetase with relaxed tRNA specificity since it is able to aspartylate not only its cognate tRNA(Asp) but also tRNA(Asn). Reaction proceeds in two steps: L-aspartate is first activated by ATP to form Asp-AMP and then transferred to the acceptor end of tRNA(Asp/Asn). The polypeptide is Aspartate--tRNA(Asp/Asn) ligase (aspS) (Paramagnetospirillum magneticum (strain ATCC 700264 / AMB-1) (Magnetospirillum magneticum)).